Here is a 301-residue protein sequence, read N- to C-terminus: Probable alpha-L-glutamate ligase (301 aa).

Residues 104–287 form the ATP-grasp domain; it reads LQLLARKGVG…VAGMIINWTE (184 aa). Residues lysine 141, 178 to 179, aspartate 187, and 211 to 213 contribute to the ATP site; these read EF and RSN. The Mg(2+) site is built by aspartate 248, glutamate 260, and asparagine 262. Mn(2+)-binding residues include aspartate 248, glutamate 260, and asparagine 262.

The protein belongs to the RimK family. Mg(2+) is required as a cofactor. The cofactor is Mn(2+).

The chain is Probable alpha-L-glutamate ligase from Marinobacter nauticus (strain ATCC 700491 / DSM 11845 / VT8) (Marinobacter aquaeolei).